The sequence spans 695 residues: Pre-mRNA-splicing factor clf-1 (695 aa).

16 HAT repeats span residues 52 to 84, 86 to 118, 120 to 152, 154 to 185, 187 to 218, 220 to 259, 261 to 295, 305 to 337, 339 to 373, 383 to 419, 421 to 452, 454 to 486, 488 to 522, 524 to 555, 578 to 616, and 621 to 654; these read EYQGRKRKEFEDYVRRNRVRLSNWLQYAQWELE, KEFARARSVFERALDVHPNNTQLWIRYVQAEIK, RNINHARNLLDRAVTRLPRVTSLWYQYLYVMEM, GDIPGTRQVFDRWMKWQPDEQAWSAYIRLEKR, GEFDRAREIFRAFTAVHPEPRTWLKWAKFEEE, GTSDTVREVFQTAIQTIAETLGDDAVDERIFIAFARYEAR, REYERARAIYKFGLDNLPRSKSMTLHAHYTTFEKQ, VILTKRRRLYEEQVKENAKNYDVWFDFARLEES, GDVDRTREVYERAIAQVPPTQEKRHWRRYIFLFLF, KDIGRARQIYDTCLNLIPHKKFTFAKVWVAKAHFEIR, GQLTTARKTLGRAIGMCPKDKIFKEYILLEQK, YEFERCRTLYEKHVMYNPANCQTWIKWAELERG, DDLERTRAIFELAVSQPILDMPEVVWKAYIDFEEE, GEYERTRALYERLLEKADHPKVWISYAQFEIN, EAKARARKIFERAHKSMKERELKAERVSLLNAWLAFEKT, and EDIEKIQKQMPRKTKKKRKLEDDTWEEYVDYIFP.

The protein belongs to the crooked-neck family. In terms of assembly, associated with the spliceosome.

It localises to the nucleus. Its function is as follows. Involved in pre-mRNA splicing and cell cycle progression. Required for the spliceosome assembly and initiation of the DNA replication. This chain is Pre-mRNA-splicing factor clf-1 (clf-1), found in Neurospora crassa (strain ATCC 24698 / 74-OR23-1A / CBS 708.71 / DSM 1257 / FGSC 987).